Reading from the N-terminus, the 624-residue chain is Membrane protein insertase YidC (624 aa).

Residues 8-28 (MIIAIALSLAVLLGWNYFVTA) traverse the membrane as a helical segment. Positions 36 to 95 (QQQAAQVNPSQGVNPSQGVDPSQGVNASPSPKEGGPSAPVPGTLPGAAGGSPQAALARDE) are disordered. Positions 43–64 (NPSQGVNPSQGVDPSQGVNASP) are enriched in polar residues. The next 5 membrane-spanning stretches (helical) occupy residues 370–390 (FDLLIDWGWFYFITKPMFKAL), 396–416 (LFGNFGVSILVVTLILKLFFL), 470–490 (WPVLIQIPVFFSLYKVLFVTI), 526–542 (LLHLGVWPIVMGITMFL), and 559–579 (FTFMPIIFTFMLGSFPAGLVI).

It belongs to the OXA1/ALB3/YidC family. Type 1 subfamily. Interacts with the Sec translocase complex via SecD. Specifically interacts with transmembrane segments of nascent integral membrane proteins during membrane integration.

The protein resides in the cell inner membrane. Functionally, required for the insertion and/or proper folding and/or complex formation of integral membrane proteins into the membrane. Involved in integration of membrane proteins that insert both dependently and independently of the Sec translocase complex, as well as at least some lipoproteins. Aids folding of multispanning membrane proteins. This Methylobacterium sp. (strain 4-46) protein is Membrane protein insertase YidC.